The sequence spans 195 residues: ATP-dependent Clp protease proteolytic subunit (195 aa).

Residue Ser-99 is the Nucleophile of the active site. The active site involves His-124.

Belongs to the peptidase S14 family. In terms of assembly, fourteen ClpP subunits assemble into 2 heptameric rings which stack back to back to give a disk-like structure with a central cavity, resembling the structure of eukaryotic proteasomes.

The protein resides in the cytoplasm. The catalysed reaction is Hydrolysis of proteins to small peptides in the presence of ATP and magnesium. alpha-casein is the usual test substrate. In the absence of ATP, only oligopeptides shorter than five residues are hydrolyzed (such as succinyl-Leu-Tyr-|-NHMec, and Leu-Tyr-Leu-|-Tyr-Trp, in which cleavage of the -Tyr-|-Leu- and -Tyr-|-Trp bonds also occurs).. Cleaves peptides in various proteins in a process that requires ATP hydrolysis. Has a chymotrypsin-like activity. Plays a major role in the degradation of misfolded proteins. The sequence is that of ATP-dependent Clp protease proteolytic subunit from Coxiella burnetii (strain RSA 331 / Henzerling II).